We begin with the raw amino-acid sequence, 229 residues long: uncharacterized protein (229 aa).

Residues 2–69 form the S4 RNA-binding domain; it reads QRLAKIISNA…KPRLWIYYKP (68 aa). The active-site Nucleophile is Asp-102.

This sequence belongs to the pseudouridine synthase RsuA family.

The enzyme catalyses a uridine in RNA = a pseudouridine in RNA. This is an uncharacterized protein from Rickettsia felis (strain ATCC VR-1525 / URRWXCal2) (Rickettsia azadi).